A 348-amino-acid chain; its full sequence is NADH-quinone oxidoreductase subunit H (348 aa).

8 consecutive transmembrane segments (helical) span residues 7 to 27 (IWLLPLLIIVGKTLLLLVVLL), 82 to 102 (GVFLLAPFVSATLALSTWAVI), 115 to 135 (VGLLYILAISSLEVYGVIMGG), 161 to 181 (IGFVLVTVILVSGSLDLTTIV), 199 to 219 (FLDWNWLVLFPMFIIFFISAL), 251 to 271 (LFFLGEYVAIVLMCALTTILF), 287 to 307 (VPGIIWFVLKVCFVFFWFAMV), and 322 to 342 (LGWKVFLPFSLAMVVITATFL).

The protein belongs to the complex I subunit 1 family. NDH-1 is composed of 14 different subunits. Subunits NuoA, H, J, K, L, M, N constitute the membrane sector of the complex.

It localises to the cell inner membrane. The catalysed reaction is a quinone + NADH + 5 H(+)(in) = a quinol + NAD(+) + 4 H(+)(out). NDH-1 shuttles electrons from NADH, via FMN and iron-sulfur (Fe-S) centers, to quinones in the respiratory chain. The immediate electron acceptor for the enzyme in this species is believed to be ubiquinone. Couples the redox reaction to proton translocation (for every two electrons transferred, four hydrogen ions are translocated across the cytoplasmic membrane), and thus conserves the redox energy in a proton gradient. This subunit may bind ubiquinone. This is NADH-quinone oxidoreductase subunit H from Bartonella quintana (strain Toulouse) (Rochalimaea quintana).